The sequence spans 231 residues: Orotidine 5'-phosphate decarboxylase (231 aa).

Substrate is bound by residues Asp11, Lys33, 60–69 (DLKLHDIPNT), Thr119, Arg181, Gln190, Gly210, and Arg211. The Proton donor role is filled by Lys62.

The protein belongs to the OMP decarboxylase family. Type 1 subfamily. As to quaternary structure, homodimer.

The catalysed reaction is orotidine 5'-phosphate + H(+) = UMP + CO2. It functions in the pathway pyrimidine metabolism; UMP biosynthesis via de novo pathway; UMP from orotate: step 2/2. Catalyzes the decarboxylation of orotidine 5'-monophosphate (OMP) to uridine 5'-monophosphate (UMP). In Malacoplasma penetrans (strain HF-2) (Mycoplasma penetrans), this protein is Orotidine 5'-phosphate decarboxylase.